Here is a 159-residue protein sequence, read N- to C-terminus: Phosphopantetheine adenylyltransferase (159 aa).

Ser-9 contacts substrate. Residues 9–10 (SF) and His-17 each bind ATP. Substrate-binding residues include Lys-41, Leu-73, and Lys-87. ATP is bound by residues 88–90 (GLR), Glu-98, and 123–129 (YGYLSSS).

It belongs to the bacterial CoaD family. Homohexamer. Mg(2+) is required as a cofactor.

It is found in the cytoplasm. The catalysed reaction is (R)-4'-phosphopantetheine + ATP + H(+) = 3'-dephospho-CoA + diphosphate. It functions in the pathway cofactor biosynthesis; coenzyme A biosynthesis; CoA from (R)-pantothenate: step 4/5. Its function is as follows. Reversibly transfers an adenylyl group from ATP to 4'-phosphopantetheine, yielding dephospho-CoA (dPCoA) and pyrophosphate. The chain is Phosphopantetheine adenylyltransferase from Thermoanaerobacter pseudethanolicus (strain ATCC 33223 / 39E) (Clostridium thermohydrosulfuricum).